Reading from the N-terminus, the 274-residue chain is MPGADYSAVKGGGLKLKAGKKNLFKVGKEKKKKNKDDKEKIDPDTVENGGWRKIADEFDMKGGTNVAIEVASGAGSTRTYVAAMDNGKFTIGFPHPEGEGPNPEEIFALVKTPDDSKISLKTGFGRYVGVDSEYQLVAMAEAIGSREQFVLVFQEGKTAFQAVSSPLFLSTVPNKEGHIYVASRTATENEMVNIRTDAIQEGPVDWRSVEDRKNARECETAYVKMYQHSKVDLKNRHIAIDVKDKKGVKKAQADGSAHELLLDRRMKMKSDRYC.

Positions 20–36 (KKNLFKVGKEKKKKNKD) match the Nuclear localization signal motif. Residues 27 to 46 (GKEKKKKNKDDKEKIDPDTV) are disordered. Over residues 34 to 43 (NKDDKEKIDP) the composition is skewed to basic and acidic residues. Positions 252 to 268 (QADGSAHELLLDRRMKM) match the Bipartite nuclear localization signal motif.

Belongs to the FRG1 family.

The protein localises to the nucleus. It localises to the cajal body. It is found in the nucleolus. Its subcellular location is the cytoplasm. Functionally, binds to mRNA in a sequence-independent manner. May play a role in regulation of pre-mRNA splicing or in the assembly of rRNA into ribosomal subunits. May be involved in mRNA transport. May be involved in epigenetic regulation of muscle differentiation through regulation of activity of the histone-lysine N-methyltransferase KMT5B. This chain is Protein FRG1 homolog (frg-1), found in Caenorhabditis elegans.